A 634-amino-acid polypeptide reads, in one-letter code: Pentatricopeptide repeat-containing protein At5g14080 (634 aa).

13 PPR repeats span residues 81–115 (DSIS…KILL), 116–150 (DSSV…GQEI), 151–185 (HPDV…GVSL), 186–220 (NTLG…NLNI), 222–256 (GSII…DCKP), 257–291 (DFMA…GVAP), 292–326 (RSSD…KFPM), 327–360 (DNDI…GKLP), 361–395 (AIRT…GYFS), 396–430 (ELQS…GLAP), 431–465 (DVSL…GCKM), 466–500 (NLTT…GIEP), and 501–535 (DETI…DHKT).

The protein belongs to the PPR family. P subfamily.

The chain is Pentatricopeptide repeat-containing protein At5g14080 from Arabidopsis thaliana (Mouse-ear cress).